Consider the following 392-residue polypeptide: Chalcone synthase (392 aa).

Cysteine 165 is an active-site residue.

This sequence belongs to the thiolase-like superfamily. Chalcone/stilbene synthases family.

It carries out the reaction (E)-4-coumaroyl-CoA + 3 malonyl-CoA + 3 H(+) = 2',4,4',6'-tetrahydroxychalcone + 3 CO2 + 4 CoA. It participates in secondary metabolite biosynthesis; flavonoid biosynthesis. In terms of biological role, the primary product of this enzyme is 4,2',4',6'-tetrahydroxychalcone (also termed naringenin-chalcone or chalcone) which can under specific conditions spontaneously isomerize into naringenin. The polypeptide is Chalcone synthase (CHS) (Persea americana (Avocado)).